Here is a 305-residue protein sequence, read N- to C-terminus: MNQIQVFISGLILLLPGAVDSYVEVKGVVGHPVTLPCTYSTYRGITTTCWGRGQCPSSACQNTLIWTNGHRVTYQKSSRYNLKGHISEGDVSLTIENSVESDSGLYCCRVEIPGWFNDQKVTFSLQVKPEIPTRPPTRPTTTRPTATGRPTTISTRSTHVPTSIRVSTSTPPTSTHTWTHKPEPTTFCPHETTAEVTGIPSHTPTDWNGTVTSSGDTWSNHTEAIPPGKPQKNPTKGFYVGICIAALLLLLLVSTVAITRYILMKRKSASLSVVAFRVSKIEALQNAAVVHSRAEDNIYIVEDRP.

The first 21 residues, 1-21, serve as a signal peptide directing secretion; the sequence is MNQIQVFISGLILLLPGAVDS. The 101-residue stretch at 22–122 folds into the Ig-like V-type domain; that stretch reads YVEVKGVVGH…PGWFNDQKVT (101 aa). Residues 22–237 are Extracellular-facing; that stretch reads YVEVKGVVGH…GKPQKNPTKG (216 aa). 3 disulfide bridges follow: C37–C108, C49–C60, and C55–C107. Positions 129-185 are disordered; sequence PEIPTRPPTRPTTTRPTATGRPTTISTRSTHVPTSIRVSTSTPPTSTHTWTHKPEPT. Composition is skewed to low complexity over residues 139–152 and 161–177; these read PTTT…RPTT and PTSI…STHT. N208 is a glycosylation site (N-linked (GlcNAc...) asparagine). Residues 238–258 traverse the membrane as a helical segment; it reads FYVGICIAALLLLLLVSTVAI. Residues 259 to 305 are Cytoplasmic-facing; sequence TRYILMKRKSASLSVVAFRVSKIEALQNAAVVHSRAEDNIYIVEDRP.

This sequence belongs to the immunoglobulin superfamily. TIM family. In terms of assembly, interacts with STAM. Interacts with SELPLG. Expressed by stimulated T-cells. Expressed during primary antigen stimulation. Expressed at higher levels on B rather than T-cells, both constitutively and after activation.

It is found in the cell membrane. Functionally, phosphatidylserine receptor that plays an important functional role in regulatory B-cells homeostasis including generation, expansion and suppressor functions. As P-selectin/SELPLG ligand, plays a specialized role in activated but not naive T-cell trafficking during inflammatory responses. Controls thereby T-cell accumulation in the inflamed central nervous system (CNS) and the induction of autoimmune disease. Also regulates expression of various anti-inflammatory cytokines and co-inhibitory ligands including IL10. Acts as a regulator of T-cell proliferation. May play a role in kidney injury and repair. In Mus musculus (Mouse), this protein is Hepatitis A virus cellular receptor 1 homolog (Havcr1).